We begin with the raw amino-acid sequence, 225 residues long: Probable GTP-binding protein EngB (225 aa).

Positions 40–224 (GPPEVAFAGR…RAAIVHAVTA (185 aa)) constitute an EngB-type G domain. GTP contacts are provided by residues 48–55 (GRSNVGKS), 75–79 (GRTQE), 102–105 (DMPG), 169–172 (TKAD), and 203–205 (TSS). Mg(2+) contacts are provided by Ser-55 and Thr-77.

It belongs to the TRAFAC class TrmE-Era-EngA-EngB-Septin-like GTPase superfamily. EngB GTPase family. The cofactor is Mg(2+).

In terms of biological role, necessary for normal cell division and for the maintenance of normal septation. The protein is Probable GTP-binding protein EngB of Chelativorans sp. (strain BNC1).